We begin with the raw amino-acid sequence, 446 residues long: Argininosuccinate synthase (446 aa).

Residues 17–25 (AFSGGLDTS) and Ala43 each bind ATP. Residue Tyr99 participates in L-citrulline binding. ATP-binding residues include Gly129 and Thr131. L-aspartate is bound by residues Thr131, Asn135, and Asp136. Asn135 is an L-citrulline binding site. Asp136 lines the ATP pocket. Arg139 and Ser192 together coordinate L-citrulline. Residue Asp194 coordinates ATP. L-citrulline contacts are provided by Thr201, Glu203, and Glu280.

It belongs to the argininosuccinate synthase family. Type 2 subfamily. Homotetramer.

It localises to the cytoplasm. It catalyses the reaction L-citrulline + L-aspartate + ATP = 2-(N(omega)-L-arginino)succinate + AMP + diphosphate + H(+). It participates in amino-acid biosynthesis; L-arginine biosynthesis; L-arginine from L-ornithine and carbamoyl phosphate: step 2/3. The protein is Argininosuccinate synthase of Burkholderia mallei (strain NCTC 10247).